The primary structure comprises 418 residues: Gamma-glutamyl phosphate reductase (418 aa).

This sequence belongs to the gamma-glutamyl phosphate reductase family.

It localises to the cytoplasm. The enzyme catalyses L-glutamate 5-semialdehyde + phosphate + NADP(+) = L-glutamyl 5-phosphate + NADPH + H(+). It functions in the pathway amino-acid biosynthesis; L-proline biosynthesis; L-glutamate 5-semialdehyde from L-glutamate: step 2/2. Catalyzes the NADPH-dependent reduction of L-glutamate 5-phosphate into L-glutamate 5-semialdehyde and phosphate. The product spontaneously undergoes cyclization to form 1-pyrroline-5-carboxylate. This is Gamma-glutamyl phosphate reductase from Lacticaseibacillus casei (strain BL23) (Lactobacillus casei).